A 173-amino-acid polypeptide reads, in one-letter code: Gamma-crystallin S-1 (173 aa).

2 consecutive Beta/gamma crystallin 'Greek key' domains span residues Gly2–Ser40 and Asp41–Pro83. The interval His84–Ser88 is connecting peptide. Beta/gamma crystallin 'Greek key' domains are found at residues Tyr89–Asp129 and Gly130–Met172.

Belongs to the beta/gamma-crystallin family.

Functionally, crystallins are the dominant structural components of the vertebrate eye lens. The protein is Gamma-crystallin S-1 (GS-1) of Chiloscyllium indicum (Slender bamboo shark).